A 219-amino-acid polypeptide reads, in one-letter code: MAEVERKEEQAKIESGSNEQKERGLDGVNKGDAVGDGKEGGEAKKVQQSPFLTNAVPRKDEGKGGEERDNIDAAEVVEKQRKHLEENQSDEILFKARCKLYYFSEETKALEERAEGTMIIEMHSKSNLAKITMFRDQIGRLGCNHFINPRFKAQPHGKVSNGWMWMSTEDTVETDALRKKIQLFVVKFYSEEDFKRFGEEYDLGRAHNEKALKTKTNKK.

Basic and acidic residues-rich tracts occupy residues 1-12 (MAEVERKEEQAK), 33-45 (AVGD…EAKK), and 57-72 (PRKD…DNID). The tract at residues 1–72 (MAEVERKEEQ…KGGEERDNID (72 aa)) is disordered. The RanBD1 domain maps to 70-210 (NIDAAEVVEK…YDLGRAHNEK (141 aa)).

Belongs to the RANBP1 family.

The protein resides in the cytoplasm. It is found in the nucleus. Its function is as follows. Important for the export of protein containing nuclear export signal (NES) out of the nucleus. The polypeptide is Ran-specific GTPase-activating protein 1 (YRB1) (Encephalitozoon cuniculi (strain GB-M1) (Microsporidian parasite)).